Here is a 67-residue protein sequence, read N- to C-terminus: Large ribosomal subunit protein bL35 (67 aa).

It belongs to the bacterial ribosomal protein bL35 family.

In Dehalococcoides mccartyi (strain ATCC BAA-2266 / KCTC 15142 / 195) (Dehalococcoides ethenogenes (strain 195)), this protein is Large ribosomal subunit protein bL35.